We begin with the raw amino-acid sequence, 565 residues long: MELEYESKRPLYIPYAGPILLEFPLLNKGSAFTNDERNHFNLHGLLPEAVETIEEQAERAYRQYQDFKNDDDKHIYLRNIQDTNETLFYRLLEAHLSEMMPIIYTPTVGEACEHFSDIYRRARGLFISYPNREHIDDMLQNATKQNVKVIVVTDGERILGLGDQGIGGMGIPIGKLSLYTACGGISPAYTLPVVLDVGTNNPQRLNDPLYMGWRHPRISGDEYYAFVDEFIQAVKRRWPNVLLQFEDFAQKNATPLLNRYRDELCCFNDDIQGTAAVTLGSLIAASHAAGSQLRDQTVTFLGAGSAGCGIAEQIIAQMMSEGLSEIQARARIFMVDRFGLLTDKLPNLLDFQSKLVQKSDDLHHWNLHNDAISLLDVVRNAKPTVLIGVSGQPGLFTEELIREMHSHCARPIVMPLSNPTSRVEARPEDIINWTDGAALVATGSPFPPVSYKEKLYPIAQCNNSYIFPGIGLGVLASGASRVTDGMLMAASRALAESSPLARHGEGALLPNIDDIQAVSKAIAMRVGQAAQLQGVAIVTSEEALSKAIEHNYWQPQYRSYKRTSF.

Residue Tyr-104 is the Proton donor of the active site. Arg-157 contributes to the NAD(+) binding site. Lys-175 acts as the Proton acceptor in catalysis. The a divalent metal cation site is built by Glu-246, Asp-247, and Asp-270. Residues Asp-270 and Asn-418 each coordinate NAD(+).

The protein belongs to the malic enzymes family. Homotetramer. Mg(2+) is required as a cofactor. Mn(2+) serves as cofactor.

The catalysed reaction is (S)-malate + NAD(+) = pyruvate + CO2 + NADH. The enzyme catalyses oxaloacetate + H(+) = pyruvate + CO2. The protein is NAD-dependent malic enzyme of Yersinia pseudotuberculosis serotype O:1b (strain IP 31758).